The following is a 572-amino-acid chain: MLTSQYLLSTSKDIPYDAKIISHQLMIRSGMIRKTSSGLYVWLPTGMRVLKKIKNIITTEMEKINALEILMPIIQPEYLWKESGRLNLYGEELLRFLDRRKNQFILGPTNEEVVTNFIGSEIHSYKQLPLTVYQIQTKFRDEIRPRFGIIRTREFTMKDAYSFHINQSCLENTYNKFYDSYINIFKKMNLNFCAVKADSGSMGGNISHEFQAFSQNGEDEIVFSNDKLYSSNMNMAESIETIDFFKKKYSSCLIKNKTNTKKSIIMSEKLNTPLINQIQTFLIQTKINDITSIAALLIRGDHELNFFKVEKIDIINKPLVFLNEKEVISLIGVKKEFLGPLGLKVPIIADISTFNMKNFTIGSNINKHFFINVNWNIDLPMPIFKDIRKVTKNDLSPNGSGYLNIKQSIEIGHIFQLGQKYSRKIQQSVKIKNGNLKNLYMGCYGIGITRIAAAVIEQHHDKNGIIWPDSIAPFEVVILPINMKKDNKIKIIAHFLYKKFKKTGIDVILDDRDERPGVMFNEVDLIGIPHQIIISKRSINYDNVEYRERKNKENILINIKDIKNFIIQKLKK.

The protein belongs to the class-II aminoacyl-tRNA synthetase family. ProS type 1 subfamily. Homodimer.

It is found in the cytoplasm. It carries out the reaction tRNA(Pro) + L-proline + ATP = L-prolyl-tRNA(Pro) + AMP + diphosphate. In terms of biological role, catalyzes the attachment of proline to tRNA(Pro) in a two-step reaction: proline is first activated by ATP to form Pro-AMP and then transferred to the acceptor end of tRNA(Pro). As ProRS can inadvertently accommodate and process non-cognate amino acids such as alanine and cysteine, to avoid such errors it has two additional distinct editing activities against alanine. One activity is designated as 'pretransfer' editing and involves the tRNA(Pro)-independent hydrolysis of activated Ala-AMP. The other activity is designated 'posttransfer' editing and involves deacylation of mischarged Ala-tRNA(Pro). The misacylated Cys-tRNA(Pro) is not edited by ProRS. In Buchnera aphidicola subsp. Acyrthosiphon pisum (strain 5A), this protein is Proline--tRNA ligase.